The sequence spans 752 residues: Photosystem I P700 chlorophyll a apoprotein A1 (752 aa).

The next 8 helical transmembrane spans lie at 73–96, 159–182, 198–222, 294–312, 349–372, 388–414, 436–458, and 533–551; these read IFAA…FHGA, LYVT…FHYH, LNHH…HVSA, ISHH…GHMY, WHAQ…HHMY, LCIF…IFMV, AIIS…LYVH, and FLVH…LILL. [4Fe-4S] cluster contacts are provided by cysteine 575 and cysteine 584. A run of 2 helical transmembrane segments spans residues 591-612 and 666-688; these read HVFL…HFSW and LSAY…MFLF. Histidine 677 contributes to the chlorophyll a' binding site. Residues methionine 685 and tyrosine 693 each coordinate chlorophyll a. Tryptophan 694 provides a ligand contact to phylloquinone. Residues 726–746 form a helical membrane-spanning segment; the sequence is AVGVAHYLLGGIATTWAFFHA.

This sequence belongs to the PsaA/PsaB family. As to quaternary structure, the PsaA/B heterodimer binds the P700 chlorophyll special pair and subsequent electron acceptors. PSI consists of a core antenna complex that captures photons, and an electron transfer chain that converts photonic excitation into a charge separation. The cyanobacterial PSI reaction center is composed of one copy each of PsaA,B,C,D,E,F,I,J,K,L,M and X, and forms trimeric complexes. It depends on PSI electron transfer chain: 5 chlorophyll a, 1 chlorophyll a', 2 phylloquinones and 3 4Fe-4S clusters. PSI core antenna: 90 chlorophyll a, 22 carotenoids, 3 phospholipids and 1 galactolipid. P700 is a chlorophyll a/chlorophyll a' dimer, A0 is one or more chlorophyll a, A1 is one or both phylloquinones and FX is a shared 4Fe-4S iron-sulfur center. as a cofactor.

The protein localises to the cellular thylakoid membrane. It carries out the reaction reduced [plastocyanin] + hnu + oxidized [2Fe-2S]-[ferredoxin] = oxidized [plastocyanin] + reduced [2Fe-2S]-[ferredoxin]. In terms of biological role, psaA and PsaB bind P700, the primary electron donor of photosystem I (PSI), as well as the electron acceptors A0, A1 and FX. PSI is a plastocyanin/cytochrome c6-ferredoxin oxidoreductase, converting photonic excitation into a charge separation, which transfers an electron from the donor P700 chlorophyll pair to the spectroscopically characterized acceptors A0, A1, FX, FA and FB in turn. Oxidized P700 is reduced on the lumenal side of the thylakoid membrane by plastocyanin or cytochrome c6. The chain is Photosystem I P700 chlorophyll a apoprotein A1 from Mastigocladus laminosus (Fischerella sp.).